The primary structure comprises 213 residues: Bcl-2-related ovarian killer protein (213 aa).

A BH4 motif is present at residues 32-44 (KALCRDYINSRLI). The BH3 signature appears at 67-83 (VSAILLRLGDELEYIRP). The BH1 motif lies at 113–132 (QIFTAGITWGKVVSLYAVAA). A BH2 motif is present at residues 165-179 (WLKRRGGWADITKCV). A helical transmembrane segment spans residues 190–210 (WLVAAVCSFGHFLKAIFFVLL).

This sequence belongs to the Bcl-2 family.

It is found in the membrane. May play a role in apoptosis. This chain is Bcl-2-related ovarian killer protein, found in Gallus gallus (Chicken).